Consider the following 160-residue polypeptide: Major strawberry allergen Fra a 1-A (160 aa).

Belongs to the BetVI family. Monomer.

In terms of biological role, may be involved in ripening of fruits. The protein is Major strawberry allergen Fra a 1-A of Fragaria ananassa (Strawberry).